The chain runs to 452 residues: F-box only protein 47 (452 aa).

An F-box domain is found at 41–91 (FGNFKALPLEIFQIILKYLSVKDISMLSMVSKTVSQHIINYISTSSGSKRL).

As to quaternary structure, part of a SCF (SKP1-cullin-F-box) protein ligase complex. Widely expressed, with highest levels in kidney, liver and pancreas. Down-regulated in tumors.

Probably recognizes and binds to some phosphorylated proteins and promotes their ubiquitination and degradation. The sequence is that of F-box only protein 47 from Homo sapiens (Human).